The sequence spans 211 residues: Dof zinc finger protein 5 (211 aa).

Residues 37-101 (FVVAREKVEP…QRRLQDSAEA (65 aa)) form a disordered region. The span at 68 to 80 (IKREAADRDEEQR) shows a compositional bias: basic and acidic residues. The Dof-type zinc finger occupies 109-163 (LPCPRCRSRDTKFCYFNNYNVNQPRHFCKACHRYWTAGGALRNVPVGAGRRKNRP). C111, C114, C136, and C139 together coordinate Zn(2+). The disordered stretch occupies residues 191-211 (SPTSPSPVYTDRWPVTPDRPF).

It is found in the nucleus. Functionally, transcription factor that may transactivate seed storage protein genes in developing seeds. The chain is Dof zinc finger protein 5 from Oryza sativa subsp. japonica (Rice).